We begin with the raw amino-acid sequence, 238 residues long: Nuclear transcription factor Y subunit B-9 (238 aa).

A DNA-binding region spans residues 64-70 (MPIANVI). The interval 91 to 102 (IQECVSEYISFV) is subunit association domain (SAD). The interval 203–238 (RYYQNGSSGQDESSVGGGSSSSINGMPAFDHYGQYK) is disordered. Over residues 208-227 (GSSGQDESSVGGGSSSSING) the composition is skewed to low complexity.

It belongs to the NFYB/HAP3 subunit family. As to quaternary structure, heterotrimeric transcription factor composed of three components, NF-YA, NF-YB and NF-YC. NF-YB and NF-YC must interact and dimerize for NF-YA association and DNA binding. Interacts with PRN1. In terms of tissue distribution, expressed in green siliques. Present in etiolated seedlings.

Its subcellular location is the nucleus. Component of the NF-Y/HAP transcription factor complex. The NF-Y complex stimulates the transcription of various genes by recognizing and binding to a CCAAT motif in promoters. Acts as a central regulator of the embryogenesis. Required for the speciation of cotyledon identity and the completion of embryo maturation. Controls seed storage protein genes through the regulation of FUS3 and ABI3. Involved in the blue light (BL) and abscisic acid (ABA) signaling pathways. In Arabidopsis thaliana (Mouse-ear cress), this protein is Nuclear transcription factor Y subunit B-9 (NFYB9).